We begin with the raw amino-acid sequence, 204 residues long: Cytochrome c biogenesis ATP-binding export protein CcmA (204 aa).

In terms of domain architecture, ABC transporter spans 3–204; that stretch reads LSGHGLRCVR…ARELRIGGTT (202 aa). 35–42 serves as a coordination point for ATP; that stretch reads GPNGAGKT.

It belongs to the ABC transporter superfamily. CcmA exporter (TC 3.A.1.107) family. As to quaternary structure, the complex is composed of two ATP-binding proteins (CcmA) and two transmembrane proteins (CcmB).

Its subcellular location is the cell inner membrane. It carries out the reaction heme b(in) + ATP + H2O = heme b(out) + ADP + phosphate + H(+). In terms of biological role, part of the ABC transporter complex CcmAB involved in the biogenesis of c-type cytochromes; once thought to export heme, this seems not to be the case, but its exact role is uncertain. Responsible for energy coupling to the transport system. The protein is Cytochrome c biogenesis ATP-binding export protein CcmA of Nitrobacter hamburgensis (strain DSM 10229 / NCIMB 13809 / X14).